The primary structure comprises 483 residues: Glutamyl-tRNA(Gln) amidotransferase subunit A (483 aa).

Catalysis depends on charge relay system residues K75 and S150. Catalysis depends on S174, which acts as the Acyl-ester intermediate.

The protein belongs to the amidase family. GatA subfamily. As to quaternary structure, heterotrimer of A, B and C subunits.

The enzyme catalyses L-glutamyl-tRNA(Gln) + L-glutamine + ATP + H2O = L-glutaminyl-tRNA(Gln) + L-glutamate + ADP + phosphate + H(+). Allows the formation of correctly charged Gln-tRNA(Gln) through the transamidation of misacylated Glu-tRNA(Gln) in organisms which lack glutaminyl-tRNA synthetase. The reaction takes place in the presence of glutamine and ATP through an activated gamma-phospho-Glu-tRNA(Gln). The protein is Glutamyl-tRNA(Gln) amidotransferase subunit A of Legionella pneumophila (strain Paris).